A 265-amino-acid chain; its full sequence is Arcelin-1 (265 aa).

The signal sequence occupies residues 1-21 (MASSNLLTLALFLVLLTHANS). N-linked (GlcNAc...) asparagine glycosylation is found at Asn33, Asn89, and Asn128. Residues Cys165 and Cys201 are joined by a disulfide bond.

The protein belongs to the leguminous lectin family. Homodimer.

Its function is as follows. Seed storage. This carbohydrate-binding lectin has toxic effects on an important bean bruchid pest, Z.subfasciatus. Antibiosis properties of legume lectins are proposed to be due to the lysis of epithelial cells of the intestine by binding to the carbohydrate moieties of these proteins. This Phaseolus vulgaris (Kidney bean) protein is Arcelin-1 (ARC1).